The following is a 189-amino-acid chain: Small ribosomal subunit protein uS5 (189 aa).

One can recognise an S5 DRBM domain in the interval 22-85 (FVDKLVAINR…EAAKRELIFV (64 aa)).

This sequence belongs to the universal ribosomal protein uS5 family. As to quaternary structure, part of the 30S ribosomal subunit. Contacts proteins S4 and S8.

In terms of biological role, with S4 and S12 plays an important role in translational accuracy. Located at the back of the 30S subunit body where it stabilizes the conformation of the head with respect to the body. This chain is Small ribosomal subunit protein uS5, found in Rhizobium etli (strain CIAT 652).